The chain runs to 119 residues: Large ribosomal subunit protein bL19 (119 aa).

This sequence belongs to the bacterial ribosomal protein bL19 family.

In terms of biological role, this protein is located at the 30S-50S ribosomal subunit interface and may play a role in the structure and function of the aminoacyl-tRNA binding site. The chain is Large ribosomal subunit protein bL19 from Borreliella afzelii (strain PKo) (Borrelia afzelii).